Here is a 128-residue protein sequence, read N- to C-terminus: Small ribosomal subunit protein uS12 (128 aa).

Position 89 is a 3-methylthioaspartic acid (Asp-89).

The protein belongs to the universal ribosomal protein uS12 family. As to quaternary structure, part of the 30S ribosomal subunit. Contacts proteins S8 and S17. May interact with IF1 in the 30S initiation complex.

Its function is as follows. With S4 and S5 plays an important role in translational accuracy. In terms of biological role, interacts with and stabilizes bases of the 16S rRNA that are involved in tRNA selection in the A site and with the mRNA backbone. Located at the interface of the 30S and 50S subunits, it traverses the body of the 30S subunit contacting proteins on the other side and probably holding the rRNA structure together. The combined cluster of proteins S8, S12 and S17 appears to hold together the shoulder and platform of the 30S subunit. The sequence is that of Small ribosomal subunit protein uS12 from Campylobacter jejuni subsp. jejuni serotype O:6 (strain 81116 / NCTC 11828).